A 317-amino-acid chain; its full sequence is Apolipoprotein E (317 aa).

The first 18 residues, methionine 1–threonine 18, serve as a signal peptide directing secretion. Repeat copies occupy residues glutamate 79 to glycine 100, proline 101 to glycine 122, alanine 123 to glycine 144, glutamine 145 to valine 166, arginine 167 to glutamate 188, arginine 189 to alanine 210, threonine 211 to arginine 232, and glycine 233 to glutamate 254. The segment at glutamate 79–glutamate 254 is 8 X 22 AA approximate tandem repeats. A Methionine sulfoxide modification is found at methionine 142. Residues histidine 157 to arginine 167 are LDL and other lipoprotein receptors binding. Valine 161 to arginine 164 contributes to the heparin binding site. Positions alanine 209–methionine 289 are lipid-binding and lipoprotein association. A heparin-binding site is contributed by glycine 228–leucine 235. Residues serine 265–glutamine 317 are homooligomerization. A specificity for association with VLDL region spans residues arginine 277–methionine 289.

Belongs to the apolipoprotein A1/A4/E family. In terms of assembly, homotetramer. May interact with ABCA1; functionally associated with ABCA1 in the biogenesis of HDLs. May interact with APP/A4 amyloid-beta peptide; the interaction is extremely stable in vitro but its physiological significance is unclear. May interact with MAPT. May interact with MAP2. In the cerebrospinal fluid, interacts with secreted SORL1. Interacts with PMEL; this allows the loading of PMEL luminal fragment on ILVs to induce fibril nucleation. In terms of processing, APOE exists as multiple glycosylated and sialylated glycoforms within cells and in plasma. The extent of glycosylation and sialylation are tissue and context specific. Post-translationally, glycated in plasma VLDL. Phosphorylated by FAM20C in the extracellular medium.

The protein resides in the secreted. Its subcellular location is the extracellular space. The protein localises to the extracellular matrix. It localises to the extracellular vesicle. It is found in the endosome. The protein resides in the multivesicular body. Its function is as follows. APOE is an apolipoprotein, a protein associating with lipid particles, that mainly functions in lipoprotein-mediated lipid transport between organs via the plasma and interstitial fluids. APOE is a core component of plasma lipoproteins and is involved in their production, conversion and clearance. Apolipoproteins are amphipathic molecules that interact both with lipids of the lipoprotein particle core and the aqueous environment of the plasma. As such, APOE associates with chylomicrons, chylomicron remnants, very low density lipoproteins (VLDL) and intermediate density lipoproteins (IDL) but shows a preferential binding to high-density lipoproteins (HDL). It also binds a wide range of cellular receptors including the LDL receptor/LDLR and the very low-density lipoprotein receptor/VLDLR that mediate the cellular uptake of the APOE-containing lipoprotein particles. Finally, APOE also has a heparin-binding activity and binds heparan-sulfate proteoglycans on the surface of cells, a property that supports the capture and the receptor-mediated uptake of APOE-containing lipoproteins by cells. The polypeptide is Apolipoprotein E (APOE) (Sus scrofa (Pig)).